The following is a 711-amino-acid chain: Ribosomal RNA large subunit methyltransferase K/L (711 aa).

One can recognise a THUMP domain in the interval 43–154 (TLYRTLLWSR…RENLVISLDL (112 aa)).

The protein belongs to the methyltransferase superfamily. RlmKL family.

The protein localises to the cytoplasm. It carries out the reaction guanosine(2445) in 23S rRNA + S-adenosyl-L-methionine = N(2)-methylguanosine(2445) in 23S rRNA + S-adenosyl-L-homocysteine + H(+). The catalysed reaction is guanosine(2069) in 23S rRNA + S-adenosyl-L-methionine = N(2)-methylguanosine(2069) in 23S rRNA + S-adenosyl-L-homocysteine + H(+). Its function is as follows. Specifically methylates the guanine in position 2445 (m2G2445) and the guanine in position 2069 (m7G2069) of 23S rRNA. The sequence is that of Ribosomal RNA large subunit methyltransferase K/L from Haemophilus influenzae (strain PittGG).